A 1435-amino-acid polypeptide reads, in one-letter code: Gag-Pol polyprotein (1435 aa).

Gly2 carries the N-myristoyl glycine; by host lipid modification. Residues 7-31 (VLSGGKLDAWEKIRLRPGGKKKYRL) form an interaction with Gp41 region. Residues 8–43 (LSGGKLDAWEKIRLRPGGKKKYRLKHLVWASRELER) form an interaction with host CALM1 region. An interaction with host AP3D1 region spans residues 12 to 19 (KLDAWEKI). The interaction with membrane phosphatidylinositol 4,5-bisphosphate and RNA stretch occupies residues 14 to 33 (DAWEKIRLRPGGKKKYRLKH). The Nuclear export signal signature appears at 16–22 (WEKIRLR). The Nuclear localization signal signature appears at 26-32 (KKKYRLK). The segment at 73–77 (EELKS) is interaction with membrane phosphatidylinositol 4,5-bisphosphate. A disordered region spans residues 108–127 (QNKSQQKTQQAAADKEKDNK). Over residues 109-118 (NKSQQKTQQA) the composition is skewed to polar residues. Position 132 is a phosphotyrosine; by host (Tyr132). The interval 189 to 227 (NTVGGHQAAMQMLKDTINEEAAEWDRVHPVHAGPIPPGQ) is interaction with human PPIA/CYPA and NUP153. The tract at residues 277–363 (YSPVSILDIK…GGPSHKARVL (87 aa)) is dimerization/Multimerization of capsid protein p24. 2 CCHC-type zinc fingers span residues 391 to 408 (VKCF…NCRA) and 412 to 429 (KGCW…DCTE). Residues 445–482 (EARKFSPEQARTNSPTSRELRVRRGDDPLSEAGAAEGQ) are disordered. The segment covering 462–471 (RELRVRRGDD) has biased composition (basic and acidic residues). Positions 489–493 (PQITL) are dimerization of protease. The region spanning 508 to 577 (REALLDTGAD…TPVNIIGRNI (70 aa)) is the Peptidase A2 domain. Asp513 (for protease activity; shared with dimeric partner) is an active-site residue. 2 dimerization of protease regions span residues 537 to 543 (GIGGFIK) and 576 to 588 (NILT…LNFP). In terms of domain architecture, Reverse transcriptase spans 631–821 (EGKISRIGPE…PPFLWMGYEL (191 aa)). 3 residues coordinate Mg(2+): Asp697, Asp772, and Asp773. The tract at residues 814–822 (FLWMGYELH) is RT 'primer grip'. A Tryptophan repeat motif motif is present at residues 985-1001 (WETWWTEYWQATWIPEW). An RNase H type-1 domain is found at 1021–1144 (IAGAETYYID…VDKLVSSGVR (124 aa)). Residues Asp1030, Glu1065, Asp1085, and Asp1136 each coordinate Mg(2+). The Integrase-type zinc finger occupies 1150–1191 (DGIDKAQEEHERYHNNWRAVASDFNLPPIVAKEIVASCDKCQ). 4 residues coordinate Zn(2+): His1159, His1163, Cys1187, and Cys1190. Residues 1201–1351 (VDCSPGIWQL…SAGERIIDII (151 aa)) form the Integrase catalytic domain. Residues Asp1211, Asp1263, and Glu1299 each coordinate Mg(2+). Residues 1370 to 1417 (FRVYYRDSRDPIWKGPAKLLWKGEGAVVIQDNSEIKVVPRREAKIIRD) constitute a DNA-binding region (integrase-type).

As to quaternary structure, homotrimer; further assembles as hexamers of trimers. Interacts with gp41 (via C-terminus). Interacts with host CALM1; this interaction induces a conformational change in the Matrix protein, triggering exposure of the myristate group. Interacts with host AP3D1; this interaction allows the polyprotein trafficking to multivesicular bodies during virus assembly. Part of the pre-integration complex (PIC) which is composed of viral genome, matrix protein, Vpr and integrase. Homodimer; the homodimer further multimerizes as homohexamers or homopentamers. Interacts with human PPIA/CYPA; This interaction stabilizes the capsid. Interacts with human NUP153. Interacts with host PDZD8; this interaction stabilizes the capsid. Interacts with monkey TRIM5; this interaction destabilizes the capsid. In terms of assembly, homodimer, whose active site consists of two apposed aspartic acid residues. As to quaternary structure, heterodimer of p66 RT and p51 RT (RT p66/p51). Heterodimerization of RT is essential for DNA polymerase activity. The overall folding of the subdomains is similar in p66 RT and p51 RT but the spatial arrangements of the subdomains are dramatically different. Homodimer; possibly can form homotetramer. Part of the pre-integration complex (PIC) which is composed of viral genome, matrix protein, Vpr and integrase. Interacts with human SMARCB1/INI1 and human PSIP1/LEDGF isoform 1. Interacts with human KPNA3; this interaction might play a role in nuclear import of the pre-integration complex. Interacts with human NUP153; this interaction might play a role in nuclear import of the pre-integration complex. Mg(2+) serves as cofactor. Specific enzymatic cleavages by the viral protease yield mature proteins. The protease is released by autocatalytic cleavage. The polyprotein is cleaved during and after budding, this process is termed maturation. Proteolytic cleavage of p66 RT removes the RNase H domain to yield the p51 RT subunit. Nucleocapsid protein p7 might be further cleaved after virus entry. Post-translationally, tyrosine phosphorylated presumably in the virion by a host kinase. Phosphorylation is apparently not a major regulator of membrane association. In terms of processing, phosphorylated possibly by host MAPK1; this phosphorylation is necessary for Pin1-mediated virion uncoating. Methylated by host PRMT6, impairing its function by reducing RNA annealing and the initiation of reverse transcription.

It is found in the host cell membrane. Its subcellular location is the host endosome. It localises to the host multivesicular body. The protein localises to the virion membrane. The protein resides in the host nucleus. It is found in the host cytoplasm. Its subcellular location is the virion. The catalysed reaction is Specific for a P1 residue that is hydrophobic, and P1' variable, but often Pro.. It catalyses the reaction Endohydrolysis of RNA in RNA/DNA hybrids. Three different cleavage modes: 1. sequence-specific internal cleavage of RNA. Human immunodeficiency virus type 1 and Moloney murine leukemia virus enzymes prefer to cleave the RNA strand one nucleotide away from the RNA-DNA junction. 2. RNA 5'-end directed cleavage 13-19 nucleotides from the RNA end. 3. DNA 3'-end directed cleavage 15-20 nucleotides away from the primer terminus.. It carries out the reaction 3'-end directed exonucleolytic cleavage of viral RNA-DNA hybrid.. The enzyme catalyses DNA(n) + a 2'-deoxyribonucleoside 5'-triphosphate = DNA(n+1) + diphosphate. With respect to regulation, protease: The viral protease is inhibited by many synthetic protease inhibitors (PIs), such as amprenavir, atazanavir, indinavir, loprinavir, nelfinavir, ritonavir and saquinavir. Use of protease inhibitors in tritherapy regimens permit more ambitious therapeutic strategies. Reverse transcriptase/ribonuclease H: RT can be inhibited either by nucleoside RT inhibitors (NRTIs) or by non nucleoside RT inhibitors (NNRTIs). NRTIs act as chain terminators, whereas NNRTIs inhibit DNA polymerization by binding a small hydrophobic pocket near the RT active site and inducing an allosteric change in this region. Classical NRTIs are abacavir, adefovir (PMEA), didanosine (ddI), lamivudine (3TC), stavudine (d4T), tenofovir (PMPA), zalcitabine (ddC), and zidovudine (AZT). Classical NNRTIs are atevirdine (BHAP U-87201E), delavirdine, efavirenz (DMP-266), emivirine (I-EBU), and nevirapine (BI-RG-587). The tritherapies used as a basic effective treatment of AIDS associate two NRTIs and one NNRTI. Mediates, with Gag polyprotein, the essential events in virion assembly, including binding the plasma membrane, making the protein-protein interactions necessary to create spherical particles, recruiting the viral Env proteins, and packaging the genomic RNA via direct interactions with the RNA packaging sequence (Psi). Gag-Pol polyprotein may regulate its own translation, by the binding genomic RNA in the 5'-UTR. At low concentration, the polyprotein would promote translation, whereas at high concentration, the polyprotein would encapsidate genomic RNA and then shut off translation. Its function is as follows. Targets the polyprotein to the plasma membrane via a multipartite membrane-binding signal, that includes its myristoylated N-terminus. Matrix protein is part of the pre-integration complex. Implicated in the release from host cell mediated by Vpu. Binds to RNA. In terms of biological role, forms the conical core that encapsulates the genomic RNA-nucleocapsid complex in the virion. Most core are conical, with only 7% tubular. The core is constituted by capsid protein hexamer subunits. The core is disassembled soon after virion entry. Host restriction factors such as TRIM5-alpha or TRIMCyp bind retroviral capsids and cause premature capsid disassembly, leading to blocks in reverse transcription. Capsid restriction by TRIM5 is one of the factors which restricts HIV-1 to the human species. Host PIN1 apparently facilitates the virion uncoating. On the other hand, interactions with PDZD8 or CYPA stabilize the capsid. Functionally, encapsulates and protects viral dimeric unspliced genomic RNA (gRNA). Binds these RNAs through its zinc fingers. Acts as a nucleic acid chaperone which is involved in rearangement of nucleic acid secondary structure during gRNA retrotranscription. Also facilitates template switch leading to recombination. As part of the polyprotein, participates in gRNA dimerization, packaging, tRNA incorporation and virion assembly. Aspartyl protease that mediates proteolytic cleavages of Gag and Gag-Pol polyproteins during or shortly after the release of the virion from the plasma membrane. Cleavages take place as an ordered, step-wise cascade to yield mature proteins. This process is called maturation. Displays maximal activity during the budding process just prior to particle release from the cell. Also cleaves Nef and Vif, probably concomitantly with viral structural proteins on maturation of virus particles. Hydrolyzes host EIF4GI and PABP1 in order to shut off the capped cellular mRNA translation. The resulting inhibition of cellular protein synthesis serves to ensure maximal viral gene expression and to evade host immune response. Also mediates cleavage of host YTHDF3. Mediates cleavage of host CARD8, thereby activating the CARD8 inflammasome, leading to the clearance of latent HIV-1 in patient CD4(+) T-cells after viral reactivation; in contrast, HIV-1 can evade CARD8-sensing when its protease remains inactive in infected cells prior to viral budding. Its function is as follows. Multifunctional enzyme that converts the viral RNA genome into dsDNA in the cytoplasm, shortly after virus entry into the cell. This enzyme displays a DNA polymerase activity that can copy either DNA or RNA templates, and a ribonuclease H (RNase H) activity that cleaves the RNA strand of RNA-DNA heteroduplexes in a partially processive 3' to 5' endonucleasic mode. Conversion of viral genomic RNA into dsDNA requires many steps. A tRNA(3)-Lys binds to the primer-binding site (PBS) situated at the 5'-end of the viral RNA. RT uses the 3' end of the tRNA primer to perform a short round of RNA-dependent minus-strand DNA synthesis. The reading proceeds through the U5 region and ends after the repeated (R) region which is present at both ends of viral RNA. The portion of the RNA-DNA heteroduplex is digested by the RNase H, resulting in a ssDNA product attached to the tRNA primer. This ssDNA/tRNA hybridizes with the identical R region situated at the 3' end of viral RNA. This template exchange, known as minus-strand DNA strong stop transfer, can be either intra- or intermolecular. RT uses the 3' end of this newly synthesized short ssDNA to perform the RNA-dependent minus-strand DNA synthesis of the whole template. RNase H digests the RNA template except for two polypurine tracts (PPTs) situated at the 5'-end and near the center of the genome. It is not clear if both polymerase and RNase H activities are simultaneous. RNase H probably can proceed both in a polymerase-dependent (RNA cut into small fragments by the same RT performing DNA synthesis) and a polymerase-independent mode (cleavage of remaining RNA fragments by free RTs). Secondly, RT performs DNA-directed plus-strand DNA synthesis using the PPTs that have not been removed by RNase H as primers. PPTs and tRNA primers are then removed by RNase H. The 3' and 5' ssDNA PBS regions hybridize to form a circular dsDNA intermediate. Strand displacement synthesis by RT to the PBS and PPT ends produces a blunt ended, linear dsDNA copy of the viral genome that includes long terminal repeats (LTRs) at both ends. In terms of biological role, catalyzes viral DNA integration into the host chromosome, by performing a series of DNA cutting and joining reactions. This enzyme activity takes place after virion entry into a cell and reverse transcription of the RNA genome in dsDNA. The first step in the integration process is 3' processing. This step requires a complex comprising the viral genome, matrix protein, Vpr and integrase. This complex is called the pre-integration complex (PIC). The integrase protein removes 2 nucleotides from each 3' end of the viral DNA, leaving recessed CA OH's at the 3' ends. In the second step, the PIC enters cell nucleus. This process is mediated through integrase and Vpr proteins, and allows the virus to infect a non dividing cell. This ability to enter the nucleus is specific of lentiviruses, other retroviruses cannot and rely on cell division to access cell chromosomes. In the third step, termed strand transfer, the integrase protein joins the previously processed 3' ends to the 5' ends of strands of target cellular DNA at the site of integration. The 5'-ends are produced by integrase-catalyzed staggered cuts, 5 bp apart. A Y-shaped, gapped, recombination intermediate results, with the 5'-ends of the viral DNA strands and the 3' ends of target DNA strands remaining unjoined, flanking a gap of 5 bp. The last step is viral DNA integration into host chromosome. This involves host DNA repair synthesis in which the 5 bp gaps between the unjoined strands are filled in and then ligated. Since this process occurs at both cuts flanking the HIV genome, a 5 bp duplication of host DNA is produced at the ends of HIV-1 integration. Alternatively, Integrase may catalyze the excision of viral DNA just after strand transfer, this is termed disintegration. The chain is Gag-Pol polyprotein (gag-pol) from Homo sapiens (Human).